The primary structure comprises 300 residues: MAEEVSTLMKATVLMRQPGRVQEIVGALRKGGGDRLQVISDFDMTLSRFAYNGKRCPSSYNILDNSKIISEECRKELTALLHHYYPIEIDPHRTVKEKLPHMVEWWTKAHNLLCQQKIQKFQIAQVVRESNAMLREGYKTFFNTLYHNNIPLFIFSAGIGDILEEIIRQMKVFHPNIHIVSNYMDFNEDGFLQGFKGQLIHTYNKNSSACENSGYFQQLEGKTNVILLGDSIGDLTMADGVPGVQNILKIGFLNDKVEERRERYMDSYDIVLEKDETLDVVNGLLQHILCQGVQLEMQGP.

Residue aspartate 41 is the Nucleophile of the active site. The Mg(2+) site is built by aspartate 41 and aspartate 43. Catalysis depends on aspartate 43, which acts as the Proton donor. Glutamate 88 is a CMP binding site. Glutamate 88 is a N(7)-methyl-GMP binding site. Substrate contacts are provided by residues 156–157 (SA) and lysine 205. Residue aspartate 230 participates in Mg(2+) binding. Lysine 256 carries the post-translational modification N6-acetyllysine.

The protein belongs to the pyrimidine 5'-nucleotidase family. Monomer.

The protein localises to the cytoplasm. It carries out the reaction N(7)-methyl-GMP + H2O = N(7)-methylguanosine + phosphate. The catalysed reaction is CMP + H2O = cytidine + phosphate. It catalyses the reaction a ribonucleoside 5'-phosphate + H2O = a ribonucleoside + phosphate. Its function is as follows. Specifically hydrolyzes 7-methylguanosine monophosphate (m(7)GMP) to 7-methylguanosine and inorganic phosphate. The specific activity for m(7)GMP may protect cells against undesired salvage of m(7)GMP and its incorporation into nucleic acids. Also has weak activity for CMP. UMP and purine nucleotides are poor substrates. In Homo sapiens (Human), this protein is 7-methylguanosine phosphate-specific 5'-nucleotidase (NT5C3B).